A 351-amino-acid chain; its full sequence is Histidinol-phosphate aminotransferase (351 aa).

Position 215 is an N6-(pyridoxal phosphate)lysine (K215).

Belongs to the class-II pyridoxal-phosphate-dependent aminotransferase family. Histidinol-phosphate aminotransferase subfamily. Pyridoxal 5'-phosphate is required as a cofactor.

It carries out the reaction L-histidinol phosphate + 2-oxoglutarate = 3-(imidazol-4-yl)-2-oxopropyl phosphate + L-glutamate. Its pathway is amino-acid biosynthesis; L-histidine biosynthesis; L-histidine from 5-phospho-alpha-D-ribose 1-diphosphate: step 7/9. The polypeptide is Histidinol-phosphate aminotransferase (Methanocorpusculum labreanum (strain ATCC 43576 / DSM 4855 / Z)).